Consider the following 317-residue polypeptide: Ornithine carbamoyltransferase (317 aa).

Carbamoyl phosphate contacts are provided by residues 57-60 (STRT), glutamine 84, arginine 108, and 135-138 (HPCQ). L-ornithine-binding positions include asparagine 166, aspartate 230, and 234 to 235 (SM). Residues 270–271 (CL) and arginine 298 each bind carbamoyl phosphate.

Belongs to the aspartate/ornithine carbamoyltransferase superfamily. OTCase family. Homododecamer.

The protein localises to the cytoplasm. The enzyme catalyses carbamoyl phosphate + L-ornithine = L-citrulline + phosphate + H(+). It participates in amino-acid biosynthesis; L-arginine biosynthesis; L-arginine from L-ornithine and carbamoyl phosphate: step 1/3. Functionally, reversibly catalyzes the transfer of the carbamoyl group from carbamoyl phosphate (CP) to the N(epsilon) atom of ornithine (ORN) to produce L-citrulline. This Pyrococcus abyssi (strain GE5 / Orsay) protein is Ornithine carbamoyltransferase.